We begin with the raw amino-acid sequence, 321 residues long: Lactamase-like protein notP (321 aa).

Residues His108, His110, Asp112, and His113 each coordinate Zn(2+). Catalysis depends on Asp112, which acts as the Proton donor/acceptor.

Belongs to the metallo-beta-lactamase superfamily. Zn(2+) serves as cofactor.

Functionally, lactamase-like protein; part of the gene cluster that mediates the biosynthesis of notoamide, a fungal indole alkaloid that belongs to a family of natural products containing a characteristic bicyclo[2.2.2]diazaoctane core. The first step of notoamide biosynthesis involves coupling of L-proline and L-tryptophan by the bimodular NRPS notE, to produce cyclo-L-tryptophan-L-proline called brevianamide F. The reverse prenyltransferase notF then acts as a deoxybrevianamide E synthase and converts brevianamide F to deoxybrevianamide E via reverse prenylation at C-2 of the indole ring leading to the bicyclo[2.2.2]diazaoctane core. Deoxybrevianamide E is further hydroxylated at C-6 of the indole ring, likely catalyzed by the cytochrome P450 monooxygenase notG, to yield 6-hydroxy-deoxybrevianamide E. 6-hydroxy-deoxybrevianamide E is a specific substrate of the prenyltransferase notC for normal prenylation at C-7 to produce 6-hydroxy-7-prenyl-deoxybrevianamide, also called notoamide S. As the proposed pivotal branching point in notoamide biosynthesis, notoamide S can be diverted to notoamide E through an oxidative pyran ring closure putatively catalyzed by either notH cytochrome P450 monooxygenase or the notD FAD-linked oxidoreductase. This step would be followed by an indole 2,3-epoxidation-initiated pinacol-like rearrangement catalyzed by the notB FAD-dependent monooxygenase leading to the formation of notoamide C and notoamide D. On the other hand notoamide S is converted to notoamide T by notH (or notD), a bifunctional oxidase that also functions as the intramolecular Diels-Alderase responsible for generation of (+)-notoamide T. To generate antipodal (-)-notoaminide T, notH' (or notD') in Aspergillus versicolor is expected to catalyze a Diels-Alder reaction leading to the opposite stereochemistry. The remaining oxidoreductase notD (or notH) likely catalyzes the oxidative pyran ring formation to yield (+)-stephacidin A. The FAD-dependent monooxygenase notI is highly similar to notB and is predicted to catalyze a similar conversion from (+)-stephacidin A to (-)-notoamide B via the 2,3-epoxidation of (+)-stephacidin A followed by a pinacol-type rearrangement. Finally, it remains unclear which enzyme could be responsible for the final hydroxylation steps leading to notoamide A and sclerotiamide. The function of notP in the notoamide biosynthesis has not been determined yet. The chain is Lactamase-like protein notP from Aspergillus sp. (strain MF297-2).